Here is a 223-residue protein sequence, read N- to C-terminus: MVNLKKAVCVISGGMDSALAAYKAKNSGYEIVALHFDYNQRTMNKERECFNLICDDLDVEKRFILDVGFIAQIGGNALTDKTLNIPKDGISENIPITYVPFRNGIFLSIAAALAQKEGCEAIYIGVVEEDSSGYPDCTEQFINSINKAINLGTADNNIVIKTPLVHLSKGDIVKEASSLKVPLELTWSCYENSEFACGTCDSCRLRLKGFKEAKLSDKIPYKS.

11-21 (ISGGMDSALAA) lines the ATP pocket. Cysteine 189, cysteine 197, cysteine 200, and cysteine 203 together coordinate Zn(2+).

Belongs to the QueC family. Zn(2+) serves as cofactor.

The enzyme catalyses 7-carboxy-7-deazaguanine + NH4(+) + ATP = 7-cyano-7-deazaguanine + ADP + phosphate + H2O + H(+). Its pathway is purine metabolism; 7-cyano-7-deazaguanine biosynthesis. In terms of biological role, catalyzes the ATP-dependent conversion of 7-carboxy-7-deazaguanine (CDG) to 7-cyano-7-deazaguanine (preQ(0)). The polypeptide is 7-cyano-7-deazaguanine synthase (Campylobacter fetus subsp. fetus (strain 82-40)).